Reading from the N-terminus, the 372-residue chain is Galanin receptor type 2 (372 aa).

Topologically, residues 1 to 28 (MNGSGSQGAENTSQEGGSGGWQPEAVLV) are extracellular. N-linked (GlcNAc...) asparagine glycosylation is found at N2 and N11. Residues 29 to 49 (PLFFALIFLVGTVGNALVLAV) traverse the membrane as a helical segment. The Cytoplasmic portion of the chain corresponds to 50–60 (LLRGGQAVSTT). A helical transmembrane segment spans residues 61–81 (NLFILNLGVADLCFILCCVPF). Topologically, residues 82–99 (QATIYTLDDWVFGSLLCK) are extracellular. C98 and C175 form a disulfide bridge. The chain crosses the membrane as a helical span at residues 100–121 (AVHFLIFLTMHASSFTLAAVSL). The Cytoplasmic segment spans residues 122–141 (DRYLAIRYPLHSRELRTPRN). The helical transmembrane segment at 142–162 (ALAAIGLIWGLALLFSGPYLS) threads the bilayer. The Extracellular portion of the chain corresponds to 163–187 (YYRQSQLANLTVCHPAWSAPRRRAM). Residues 188 to 208 (DLCTFVFSYLLPVLVLSLTYA) traverse the membrane as a helical segment. Residues 209–237 (RTLRYLWRTVDPVTAGSGSQRAKRKVTRM) are Cytoplasmic-facing. A helical membrane pass occupies residues 238–258 (IIIVAVLFCLCWMPHHALILC). At 259-260 (VW) the chain is on the extracellular side. Residues 261 to 281 (FGRFPLTRATYALRILSHLVS) form a helical membrane-spanning segment. The Cytoplasmic segment spans residues 282-372 (YANSCVNPIV…ASSRTLDPAC (91 aa)). A disordered region spans residues 353–372 (VPPPALPNCTASSRTLDPAC). Residues 361–372 (CTASSRTLDPAC) are compositionally biased toward polar residues.

Belongs to the G-protein coupled receptor 1 family.

Its subcellular location is the cell membrane. Receptor for the hormone galanin, GALP and spexin-1. The activity of this receptor is mediated by G proteins that activate the phospholipase C/protein kinase C pathway (via G(q)) and that inhibit adenylyl cyclase (via G(i)). This chain is Galanin receptor type 2 (Galr2), found in Rattus norvegicus (Rat).